We begin with the raw amino-acid sequence, 932 residues long: Protocadherin gamma-A3 (932 aa).

Positions 1–29 (MTNCLSFRNGRGLALLCALLGTLCETGSG) are cleaved as a signal peptide. Cadherin domains lie at 30-133 (QIRY…APNF), 134-242 (PTEE…PPMF), 243-347 (TQPE…APEI), 348-452 (TITS…PPTF), 453-562 (PHLS…APEI), and 570-682 (DGST…EPSA). Residues 30–692 (QIRYSVSEEL…KPNDSDLTLY (663 aa)) lie on the Extracellular side of the membrane. 3 N-linked (GlcNAc...) asparagine glycosylation sites follow: Asn265, Asn419, and Asn545. Asn685 carries N-linked (GlcNAc...) asparagine glycosylation. Residues 693–713 (LVVAVAAVSCVFLAFVIVLLA) traverse the membrane as a helical segment. Topologically, residues 714–932 (LRLRRWHKSR…KKKSGKKEKK (219 aa)) are cytoplasmic. 2 disordered regions span residues 805 to 841 (NLLQQAPPNTDWRFSQAQRPGTSGSQNGDDTGTWPNN) and 902 to 932 (ATLTNAAGKRDGKAPAGGNGNKKKSGKKEKK). Over residues 922–932 (NKKKSGKKEKK) the composition is skewed to basic residues.

It is found in the cell membrane. Potential calcium-dependent cell-adhesion protein. May be involved in the establishment and maintenance of specific neuronal connections in the brain. In Homo sapiens (Human), this protein is Protocadherin gamma-A3 (PCDHGA3).